We begin with the raw amino-acid sequence, 547 residues long: Chaperonin GroEL (547 aa).

ATP-binding positions include 30 to 33, Lys51, 87 to 91, Gly415, and Asp495; these read TLGP and DGTTT.

It belongs to the chaperonin (HSP60) family. Forms a cylinder of 14 subunits composed of two heptameric rings stacked back-to-back. Interacts with the co-chaperonin GroES.

Its subcellular location is the cytoplasm. The enzyme catalyses ATP + H2O + a folded polypeptide = ADP + phosphate + an unfolded polypeptide.. Together with its co-chaperonin GroES, plays an essential role in assisting protein folding. The GroEL-GroES system forms a nano-cage that allows encapsulation of the non-native substrate proteins and provides a physical environment optimized to promote and accelerate protein folding. The polypeptide is Chaperonin GroEL (Shewanella pealeana (strain ATCC 700345 / ANG-SQ1)).